The following is a 59-amino-acid chain: Single-pass membrane and coiled-coil domain-containing protein 4 homolog (59 aa).

Residues 1-11 (MAGRNKAKPRL) are compositionally biased toward basic residues. Residues 1–20 (MAGRNKAKPRLSKKEKEERR) form a disordered region. Residues 10–30 (RLSKKEKEERRKDMAEVQEKV) adopt a coiled-coil conformation. A helical membrane pass occupies residues 30–50 (VFSVVVPVVVAFTVVIMLIVY).

It belongs to the SMCO4 family.

Its subcellular location is the membrane. This is Single-pass membrane and coiled-coil domain-containing protein 4 homolog from Argas monolakensis (Mono lake bird tick).